We begin with the raw amino-acid sequence, 700 residues long: Peroxisomal acyl-coenzyme A oxidase 3 (700 aa).

Alanine 2 bears the N-acetylalanine mark. Phosphothreonine is present on threonine 281. Residues 698–700 (SKL) carry the Microbody targeting signal motif.

The protein belongs to the acyl-CoA oxidase family. The cofactor is FAD.

The protein resides in the peroxisome. It catalyses the reaction a 2,3-saturated acyl-CoA + O2 = a (2E)-enoyl-CoA + H2O2. The catalysed reaction is (2S)-pristanoyl-CoA + O2 = (2E)-pristenoyl-CoA + H2O2. The enzyme catalyses tetracosanoyl-CoA + O2 = (2E)-tetracosenoyl-CoA + H2O2. It carries out the reaction hexadecanoyl-CoA + O2 = (2E)-hexadecenoyl-CoA + H2O2. It catalyses the reaction hexadecanedioyl-CoA + O2 = (2E)-hexadecenedioyl-CoA + H2O2. Its pathway is lipid metabolism; peroxisomal fatty acid beta-oxidation. Functionally, oxidizes the CoA-esters of 2-methyl-branched fatty acids. The protein is Peroxisomal acyl-coenzyme A oxidase 3 (ACOX3) of Homo sapiens (Human).